We begin with the raw amino-acid sequence, 315 residues long: 4-hydroxy-3-methylbut-2-enyl diphosphate reductase (315 aa).

Cys12 provides a ligand contact to [4Fe-4S] cluster. (2E)-4-hydroxy-3-methylbut-2-enyl diphosphate contacts are provided by His41 and His74. Residues His41 and His74 each contribute to the dimethylallyl diphosphate site. Residues His41 and His74 each coordinate isopentenyl diphosphate. Cys96 provides a ligand contact to [4Fe-4S] cluster. A (2E)-4-hydroxy-3-methylbut-2-enyl diphosphate-binding site is contributed by His124. His124 serves as a coordination point for dimethylallyl diphosphate. Position 124 (His124) interacts with isopentenyl diphosphate. Glu126 (proton donor) is an active-site residue. A (2E)-4-hydroxy-3-methylbut-2-enyl diphosphate-binding site is contributed by Thr168. Cys198 contacts [4Fe-4S] cluster. Positions 226, 227, 228, and 270 each coordinate (2E)-4-hydroxy-3-methylbut-2-enyl diphosphate. Ser226, Ser227, Asn228, and Ser270 together coordinate dimethylallyl diphosphate. Residues Ser226, Ser227, Asn228, and Ser270 each coordinate isopentenyl diphosphate.

The protein belongs to the IspH family. [4Fe-4S] cluster serves as cofactor.

It catalyses the reaction isopentenyl diphosphate + 2 oxidized [2Fe-2S]-[ferredoxin] + H2O = (2E)-4-hydroxy-3-methylbut-2-enyl diphosphate + 2 reduced [2Fe-2S]-[ferredoxin] + 2 H(+). The catalysed reaction is dimethylallyl diphosphate + 2 oxidized [2Fe-2S]-[ferredoxin] + H2O = (2E)-4-hydroxy-3-methylbut-2-enyl diphosphate + 2 reduced [2Fe-2S]-[ferredoxin] + 2 H(+). The protein operates within isoprenoid biosynthesis; dimethylallyl diphosphate biosynthesis; dimethylallyl diphosphate from (2E)-4-hydroxy-3-methylbutenyl diphosphate: step 1/1. Its pathway is isoprenoid biosynthesis; isopentenyl diphosphate biosynthesis via DXP pathway; isopentenyl diphosphate from 1-deoxy-D-xylulose 5-phosphate: step 6/6. Its function is as follows. Catalyzes the conversion of 1-hydroxy-2-methyl-2-(E)-butenyl 4-diphosphate (HMBPP) into a mixture of isopentenyl diphosphate (IPP) and dimethylallyl diphosphate (DMAPP). Acts in the terminal step of the DOXP/MEP pathway for isoprenoid precursor biosynthesis. This is 4-hydroxy-3-methylbut-2-enyl diphosphate reductase from Pseudomonas fluorescens (strain SBW25).